The chain runs to 328 residues: Arabinose 5-phosphate isomerase KdsD (328 aa).

The 143-residue stretch at 42 to 184 (CEKMFWCKGK…AVALLKARGF (143 aa)) folds into the SIS domain. Residues 75–76 (GT), His82, His88, 114–123 (ALIPVLKRLH), 148–150 (KVA), Thr222, and Asp275 each bind substrate. His82 contacts Zn(2+). Positions 210–268 (MHTGDEIPHVKKTASLRDALLEVTRKNLGMTVICDDNMMIEGIFTDGDLRRVFDMGVDV) constitute a CBS 1 domain. One can recognise a CBS 2 domain in the interval 277-328 (MTPGGIRVRPGILAVEALNLMQSRHITSVMVADGDHLLGVLHMHDLLRAGVV).

The protein belongs to the SIS family. GutQ/KpsF subfamily. As to quaternary structure, homotetramer.

It catalyses the reaction D-arabinose 5-phosphate = D-ribulose 5-phosphate. Its pathway is carbohydrate biosynthesis; 3-deoxy-D-manno-octulosonate biosynthesis; 3-deoxy-D-manno-octulosonate from D-ribulose 5-phosphate: step 1/3. It functions in the pathway bacterial outer membrane biogenesis; lipopolysaccharide biosynthesis. Functionally, involved in the biosynthesis of 3-deoxy-D-manno-octulosonate (KDO), a unique 8-carbon sugar component of lipopolysaccharides (LPSs). Catalyzes the reversible aldol-ketol isomerization between D-ribulose 5-phosphate (Ru5P) and D-arabinose 5-phosphate (A5P). The sequence is that of Arabinose 5-phosphate isomerase KdsD (kdsD) from Shigella flexneri.